A 779-amino-acid chain; its full sequence is 3-isopropylmalate dehydratase (779 aa).

Residues Cys-360, Cys-421, and Cys-424 each coordinate [4Fe-4S] cluster. The segment at 484–518 (QDQSSPKVEVTSEDEKELESAAYDHAEPVQPEDAP) is disordered. Position 488 is a phosphoserine (Ser-488). A Phosphothreonine modification is found at Thr-494. A Phosphoserine modification is found at Ser-495. The segment covering 501–510 (LESAAYDHAE) has biased composition (basic and acidic residues).

This sequence belongs to the aconitase/IPM isomerase family. As to quaternary structure, monomer. [4Fe-4S] cluster is required as a cofactor.

The enzyme catalyses (2R,3S)-3-isopropylmalate = (2S)-2-isopropylmalate. The protein operates within amino-acid biosynthesis; L-leucine biosynthesis; L-leucine from 3-methyl-2-oxobutanoate: step 2/4. In terms of biological role, catalyzes the isomerization between 2-isopropylmalate and 3-isopropylmalate, via the formation of 2-isopropylmaleate. The sequence is that of 3-isopropylmalate dehydratase (LEU1) from Saccharomyces cerevisiae (strain ATCC 204508 / S288c) (Baker's yeast).